Here is a 186-residue protein sequence, read N- to C-terminus: GTP cyclohydrolase 1 2 (186 aa).

The protein belongs to the GTP cyclohydrolase I family. Homomer.

It carries out the reaction GTP + H2O = 7,8-dihydroneopterin 3'-triphosphate + formate + H(+). It functions in the pathway cofactor biosynthesis; 7,8-dihydroneopterin triphosphate biosynthesis; 7,8-dihydroneopterin triphosphate from GTP: step 1/1. This chain is GTP cyclohydrolase 1 2, found in Pseudomonas putida (strain ATCC 47054 / DSM 6125 / CFBP 8728 / NCIMB 11950 / KT2440).